The sequence spans 898 residues: Alanine--tRNA ligase (898 aa).

Zn(2+) contacts are provided by H582, H586, C685, and H689.

Belongs to the class-II aminoacyl-tRNA synthetase family. The cofactor is Zn(2+).

It localises to the cytoplasm. The enzyme catalyses tRNA(Ala) + L-alanine + ATP = L-alanyl-tRNA(Ala) + AMP + diphosphate. Its function is as follows. Catalyzes the attachment of alanine to tRNA(Ala) in a two-step reaction: alanine is first activated by ATP to form Ala-AMP and then transferred to the acceptor end of tRNA(Ala). Also edits incorrectly charged Ser-tRNA(Ala) and Gly-tRNA(Ala) via its editing domain. In Mycolicibacterium gilvum (strain PYR-GCK) (Mycobacterium gilvum (strain PYR-GCK)), this protein is Alanine--tRNA ligase.